The primary structure comprises 647 residues: Dihydrolipoyllysine-residue acetyltransferase component of pyruvate dehydrogenase complex (647 aa).

A mitochondrion-targeting transit peptide spans 1 to 86 (MWRVCARRAQ…LWGSPSRRWY (86 aa)). The Lipoyl-binding 1 domain maps to 91-167 (HQKVPLPSLS…PVGAIICITV (77 aa)). At Ser-100 the chain carries Phosphoserine. Lys-132 carries the N6-lipoyllysine modification. The interval 184–216 (SAAPAPPAAPAPTPAAPAPSPTPSAQAPGSSYP) is disordered. Residues 187–205 (PAPPAAPAPTPAAPAPSPT) are compositionally biased toward pro residues. Positions 218–294 (HMQVLLPALS…PLGTPLCIIV (77 aa)) constitute a Lipoyl-binding 2 domain. Residue Lys-259 is modified to N6-lipoyllysine. A disordered region spans residues 311 to 352 (VTDLKPPAPPPIPSPAAPVPPAPQPVAPPPSAPRPAAPAGPK). Residues 316–348 (PPAPPPIPSPAAPVPPAPQPVAPPPSAPRPAAP) show a composition bias toward pro residues. The Peripheral subunit-binding (PSBD) domain occupies 356–393 (FVSPLAKKLAAEKGIDLTQVKGTGPDGRIIKKDIDSFV). Position 461 (Arg-461) interacts with CoA. Lys-466 is subject to N6-acetyllysine. Lys-473 is modified (N6-succinyllysine). Residue Ser-475 coordinates CoA. Lys-547 is modified (N6-succinyllysine). Residues Ser-566, Asn-567, and Gly-591 each contribute to the CoA site. Residues His-620 and Asp-624 contribute to the active site.

Belongs to the 2-oxoacid dehydrogenase family. As to quaternary structure, part of the pyruvate dehydrogenase complex (PDHc) that is a multi-enzyme complex composed of multiple copies of three enzymes, pyruvate dehydrogenase (subunits PDH1A and PDHB, E1 component), dihydrolipoamide acetyltransferase (DLAT, E2 component), and dihydrolipoamide dehydrogenase (DLD, E3 component) to which is added an additional protein the E3-binding protein (PDHX, E3BP). In terms of structural architecture, the E2 and E3BP components assemble into a 60meric central core with icosahedral symmetry. The central core is decorated with E1 and E3 proteins. Currently, two alternative models for the E2:E3BP stoichiometry are considered as being either 48:12 (E2(48)-E3BP(12)) or 40:20 (E2(40)-E3BP(20)). Interacts with PDK2 and PDK3. Interacts with SIRT4. Interacts with PDHB. (R)-lipoate is required as a cofactor. In terms of processing, delipoylated at Lys-132 and Lys-259 by SIRT4, delipoylation decreases the PHD complex activity.

It is found in the mitochondrion matrix. It catalyses the reaction N(6)-[(R)-dihydrolipoyl]-L-lysyl-[protein] + acetyl-CoA = N(6)-[(R)-S(8)-acetyldihydrolipoyl]-L-lysyl-[protein] + CoA. In terms of biological role, as part of the pyruvate dehydrogenase complex, catalyzes the transfers of an acetyl group to a lipoic acid moiety. The pyruvate dehydrogenase complex, catalyzes the overall conversion of pyruvate to acetyl-CoA and CO(2), and thereby links cytoplasmic glycolysis and the mitochondrial tricarboxylic acid (TCA) cycle. This Bos taurus (Bovine) protein is Dihydrolipoyllysine-residue acetyltransferase component of pyruvate dehydrogenase complex.